Here is a 113-residue protein sequence, read N- to C-terminus: MKARLGSLLVLATLVTASNAACSIQRLKRLPNEKSDECTDVDGGKHVLNTYWQKNCEWCFCEKTAITCCTKTLIPVSYDKKRCQRQFHSENCTYSVVERTNPGKTCPVNGWTI.

The signal sequence occupies residues 1–20 (MKARLGSLLVLATLVTASNA). Cystine bridges form between Cys22–Cys69, Cys38–Cys61, Cys56–Cys92, Cys59–Cys68, and Cys83–Cys106.

Belongs to the beta-microseminoprotein family. In terms of assembly, homodimer; Interacts with PI16.

It localises to the secreted. This chain is Beta-microseminoprotein (Msmb), found in Rattus norvegicus (Rat).